Reading from the N-terminus, the 203-residue chain is MEDSRLLITLILVFGVIFLKKFFQSNQHPSAQRLSATGVNAHGRPQGSTQNALRRTGRVNGGHPVTTQMVETVQNLAPNLHPEQIRYSLENTGSVEETVERYLRGDEFSFPPGFEPSRAPMGANAAVDNNAAGGGEFNDPRKKNMICAENLLDKFHVDLNEDMSNLSFKDLDIEERKRLLVWQARKNLETKLQSDKDLQSLLT.

The Lumenal portion of the chain corresponds to 1 to 6 (MEDSRL). A helical membrane pass occupies residues 7 to 23 (LITLILVFGVIFLKKFF). The Cytoplasmic portion of the chain corresponds to 24–203 (QSNQHPSAQR…SDKDLQSLLT (180 aa)). The interval 36–61 (ATGVNAHGRPQGSTQNALRRTGRVNG) is disordered. In terms of domain architecture, CUE spans 65 to 107 (VTTQMVETVQNLAPNLHPEQIRYSLENTGSVEETVERYLRGDE).

This sequence belongs to the CUE1 family. In terms of assembly, forms a heterodimer with UBC7. Interacts with SSM4/DOA10 and UBX2/SEL1.

The protein resides in the endoplasmic reticulum membrane. Functionally, component of the endoplasmic reticulum-associated protein degradation (ERAD) pathway. Recruits the soluble ubiquitin-conjugating enzyme UBC7 to the cytoplasmic face of the endoplasmic reticulum membrane where it functions in degradation of misfolded or regulated proteins localized in the endoplasmic reticulum (ER) lumen or membrane via the ubiquitin-proteasome system. Targets the E2 conjugating enzyme UBC7 to the DOA10 ubiquitin ligase complex, which is part of the ERAD-C pathway responsible for the rapid degradation of membrane proteins with misfolded cytoplasmic domains, and to the HRD1 ubiquitin ligase complex, which is part of the ERAD-L and ERAD-M pathways responsible for the rapid degradation of soluble lumenal and membrane proteins with misfolded lumenal domains (ERAD-L), or ER-membrane proteins with misfolded transmembrane domains (ERAD-M). Also has a role in cold adaptation, perhaps through effects on sterol biosynthesis. The chain is Coupling of ubiquitin conjugation to ER degradation protein 1 (CUE1) from Saccharomyces cerevisiae (strain ATCC 204508 / S288c) (Baker's yeast).